Here is an 89-residue protein sequence, read N- to C-terminus: Small ribosomal subunit protein uS15 (89 aa).

Residues 1 to 21 (MALTTEEKKQVLSEYGLHETD) are compositionally biased toward basic and acidic residues. Positions 1 to 24 (MALTTEEKKQVLSEYGLHETDTGS) are disordered.

Belongs to the universal ribosomal protein uS15 family. As to quaternary structure, part of the 30S ribosomal subunit. Forms a bridge to the 50S subunit in the 70S ribosome, contacting the 23S rRNA.

Its function is as follows. One of the primary rRNA binding proteins, it binds directly to 16S rRNA where it helps nucleate assembly of the platform of the 30S subunit by binding and bridging several RNA helices of the 16S rRNA. Forms an intersubunit bridge (bridge B4) with the 23S rRNA of the 50S subunit in the ribosome. The polypeptide is Small ribosomal subunit protein uS15 (Rhodococcus jostii (strain RHA1)).